The chain runs to 101 residues: Large ribosomal subunit protein uL23 (101 aa).

It belongs to the universal ribosomal protein uL23 family. Part of the 50S ribosomal subunit. Contacts protein L29, and trigger factor when it is bound to the ribosome.

Functionally, one of the early assembly proteins it binds 23S rRNA. One of the proteins that surrounds the polypeptide exit tunnel on the outside of the ribosome. Forms the main docking site for trigger factor binding to the ribosome. This is Large ribosomal subunit protein uL23 from Corynebacterium jeikeium (strain K411).